The following is a 224-amino-acid chain: Phosphoribosylformylglycinamidine synthase subunit PurQ (224 aa).

The Glutamine amidotransferase type-1 domain maps to 2-224 (KFAVIVFPGS…IVDNFVKGGV (223 aa)). Cys-86 acts as the Nucleophile in catalysis. Active-site residues include His-194 and Glu-196.

As to quaternary structure, part of the FGAM synthase complex composed of 1 PurL, 1 PurQ and 2 PurS subunits.

The protein localises to the cytoplasm. It catalyses the reaction N(2)-formyl-N(1)-(5-phospho-beta-D-ribosyl)glycinamide + L-glutamine + ATP + H2O = 2-formamido-N(1)-(5-O-phospho-beta-D-ribosyl)acetamidine + L-glutamate + ADP + phosphate + H(+). The enzyme catalyses L-glutamine + H2O = L-glutamate + NH4(+). It functions in the pathway purine metabolism; IMP biosynthesis via de novo pathway; 5-amino-1-(5-phospho-D-ribosyl)imidazole from N(2)-formyl-N(1)-(5-phospho-D-ribosyl)glycinamide: step 1/2. Its function is as follows. Part of the phosphoribosylformylglycinamidine synthase complex involved in the purines biosynthetic pathway. Catalyzes the ATP-dependent conversion of formylglycinamide ribonucleotide (FGAR) and glutamine to yield formylglycinamidine ribonucleotide (FGAM) and glutamate. The FGAM synthase complex is composed of three subunits. PurQ produces an ammonia molecule by converting glutamine to glutamate. PurL transfers the ammonia molecule to FGAR to form FGAM in an ATP-dependent manner. PurS interacts with PurQ and PurL and is thought to assist in the transfer of the ammonia molecule from PurQ to PurL. The sequence is that of Phosphoribosylformylglycinamidine synthase subunit PurQ from Caldanaerobacter subterraneus subsp. tengcongensis (strain DSM 15242 / JCM 11007 / NBRC 100824 / MB4) (Thermoanaerobacter tengcongensis).